Reading from the N-terminus, the 347-residue chain is MKQTIILLYGGRSAEREVSVLSAESVMRAVDYDRFTVKTFFISQSGDFIKTQEFSHDPGQEDRLMTNETIDWDKKVAPSAIYEEGAVVFPVLHGPMGEDGSVQGFLEVLKMPYVGCNILSSSLAMDKITTKRVLESAGIAQVPYVAIVEGDDVTAKIAEVEEKLAYPVFTKPSNMGSSVGISKSENQEELRQALELAFRYDSRVLVEQGVNAREIEVGLLGNYDVKSTLPGEVVKDVAFYDYDAKYIDNKITMDIPAKISDDVVAVMRQNAETAFRAIGGLGLSRCDFFYTDKGEIFLNELNTMPGFTQWSMYPLLWDNMGISYPELIERLVDLAKESFDKREAHLI.

The ATP-grasp domain occupies 131–333 (KRVLESAGIA…YPELIERLVD (203 aa)). 161 to 216 (EEKLAYPVFTKPSNMGSSVGISKSENQEELRQALELAFRYDSRVLVEQGVNAREIE) provides a ligand contact to ATP. D287, E300, and N302 together coordinate Mg(2+).

This sequence belongs to the D-alanine--D-alanine ligase family. The cofactor is Mg(2+). Mn(2+) is required as a cofactor.

The protein resides in the cytoplasm. The enzyme catalyses 2 D-alanine + ATP = D-alanyl-D-alanine + ADP + phosphate + H(+). It functions in the pathway cell wall biogenesis; peptidoglycan biosynthesis. Its function is as follows. Cell wall formation. This is D-alanine--D-alanine ligase from Streptococcus pneumoniae (strain CGSP14).